The chain runs to 589 residues: Class I diterpene synthase 2, chloroplastic (589 aa).

Mg(2+)-binding residues include Asp-328, Asp-332, Asn-472, Thr-476, and Glu-480. A DDXXD motif motif is present at residues 328–332; it reads DDFFD.

The protein belongs to the terpene synthase family. It depends on Mg(2+) as a cofactor. Mostly expressed in trichomes of leaves and fruits.

Its subcellular location is the plastid. It is found in the chloroplast. It catalyses the reaction 9alpha-copalyl diphosphate + H2O = (13S)-vitexifolin A + diphosphate. It carries out the reaction peregrinol diphosphate = (13R)-9,13-epoxylabd-14-ene + diphosphate. The catalysed reaction is peregrinol diphosphate + H2O = viteagnusin D + diphosphate. Its pathway is secondary metabolite biosynthesis; terpenoid biosynthesis. In terms of biological role, involved in the biosynthesis of labdane-type diterpenoid including cleroda-dienols, and peregrinol lactones and furan derivatives, dopaminergic diterpenoids that can bind to dopamine receptors in the human pituitary gland, have probably ability to lower prolactin levels, and are used to treat menstrual cycle disorders (e.g. premenstrual syndrome and mastodynia). Terpene synthase the catalyzes the conversion of peregrinol diphosphate to viteagnusin D and 9,13(R)-epoxy-labd-14-ene, and of syn-copalyl diphosophate to vitexifolin A. This Vitex agnus-castus (Chaste tree) protein is Class I diterpene synthase 2, chloroplastic.